The primary structure comprises 121 residues: Small ribosomal subunit protein uS13 (121 aa).

Positions 91–121 (HRRGLPVRGQNTKNNARTRKGPRKTVANKKK) are disordered. Positions 106–121 (ARTRKGPRKTVANKKK) are enriched in basic residues.

Belongs to the universal ribosomal protein uS13 family. As to quaternary structure, part of the 30S ribosomal subunit. Forms a loose heterodimer with protein S19. Forms two bridges to the 50S subunit in the 70S ribosome.

In terms of biological role, located at the top of the head of the 30S subunit, it contacts several helices of the 16S rRNA. In the 70S ribosome it contacts the 23S rRNA (bridge B1a) and protein L5 of the 50S subunit (bridge B1b), connecting the 2 subunits; these bridges are implicated in subunit movement. Contacts the tRNAs in the A and P-sites. The polypeptide is Small ribosomal subunit protein uS13 (Lysinibacillus sphaericus (strain C3-41)).